The chain runs to 397 residues: Efflux pump periplasmic linker BepD (397 aa).

A signal peptide spans 1–26 (MTLNRTIRCFAAGAAFIVFAAQPALA). Residues 98–139 (APYQAELEKAQAQVAQAEAQYQQSIRDAERAEQLVQQKVQSA) are a coiled coil.

This sequence belongs to the membrane fusion protein (MFP) (TC 8.A.1) family. Probably part of a tripartite efflux pump, which is composed of an outer membrane efflux protein, an inner membrane protein and a protein that expands the periplasmic space. Could form a tripartite pump with BepC and BepE.

It localises to the periplasm. Its function is as follows. Involved in resistance to several unrelated toxic compounds, such as dyes, detergents and antibiotics. The polypeptide is Efflux pump periplasmic linker BepD (bepD) (Brucella suis biovar 1 (strain 1330)).